The following is a 363-amino-acid chain: Peroxidase (363 aa).

Positions 1–20 (MKLSLLSTFAAVIIGALALP) are cleaved as a signal peptide. Q21 carries the pyrrolidone carboxylic acid modification. Cystine bridges form between C31–C43, C42–C312, C62–C148, and C276–C341. Residue H75 is the Proton acceptor of the active site. Ca(2+)-binding residues include D76, G94, D96, and S98. Residue N162 is glycosylated (N-linked (GlcNAc...) (high mannose) asparagine). H203 provides a ligand contact to heme b. Residues S204, D221, T223, V226, and D228 each contribute to the Ca(2+) site. Residue S358 is glycosylated (O-linked (Man...) serine).

Belongs to the peroxidase family. Ligninase subfamily. It depends on Ca(2+) as a cofactor. The cofactor is heme b.

The protein resides in the secreted. It carries out the reaction 2 a phenolic donor + H2O2 = 2 a phenolic radical donor + 2 H2O. This is Peroxidase (CIP1) from Coprinopsis cinerea (strain Okayama-7 / 130 / ATCC MYA-4618 / FGSC 9003) (Inky cap fungus).